Here is a 36-residue protein sequence, read N- to C-terminus: Pancreatic polypeptide (36 aa).

The residue at position 36 (tyrosine 36) is a Tyrosine amide.

The protein belongs to the NPY family.

The protein localises to the secreted. Functionally, hormone secreted by pancreatic cells that acts as a regulator of pancreatic and gastrointestinal functions. The protein is Pancreatic polypeptide (PPY) of Meleagris gallopavo (Wild turkey).